A 182-amino-acid polypeptide reads, in one-letter code: CDP-diacylglycerol--glycerol-3-phosphate 3-phosphatidyltransferase (182 aa).

Topologically, residues 2 to 12 (QFNIPTLLTLF) are cytoplasmic. Residues 13 to 37 (RVILIPFFVLVFYLPVTWSPFAAAL) form a helical membrane-spanning segment. The Periplasmic segment spans residues 38 to 60 (IFCVAAVTDWFDGFLARRWNQST). Residues 61–81 (RFGAFLDPVADKVLVAIAMVL) form a helical membrane-spanning segment. Residues 82 to 86 (VTEHY) lie on the Cytoplasmic side of the membrane. The helical transmembrane segment at 87–107 (HSWWVTLPAATMIAREIIISA) threads the bilayer. The Periplasmic segment spans residues 108–145 (LREWMAELGKRSSVAVSWIGKVKTTAQMVALAWLLWRP). The helical transmembrane segment at 146-168 (NIWVEYVGIALFFVAAVLTLWSM) threads the bilayer. Topologically, residues 169 to 181 (LQYLSAARADLLD) are cytoplasmic.

The protein belongs to the CDP-alcohol phosphatidyltransferase class-I family.

It localises to the cell inner membrane. It carries out the reaction a CDP-1,2-diacyl-sn-glycerol + sn-glycerol 3-phosphate = a 1,2-diacyl-sn-glycero-3-phospho-(1'-sn-glycero-3'-phosphate) + CMP + H(+). It functions in the pathway phospholipid metabolism; phosphatidylglycerol biosynthesis; phosphatidylglycerol from CDP-diacylglycerol: step 1/2. Catalyzes the conversion of cytidine diphosphate diacylglycerol (CDP-DG) and glycerol 3-phosphate into phosphatidylglycerol. Essential for the synthesis of anionic phospholipids, thereby playing a role in balancing the ratio of zwitterionic and anionic phospholipids, which is thought to be important for normal membrane function. This Shigella boydii serotype 4 (strain Sb227) protein is CDP-diacylglycerol--glycerol-3-phosphate 3-phosphatidyltransferase.